The chain runs to 264 residues: Hydroxyethylthiazole kinase (264 aa).

M43 contributes to the substrate binding site. 2 residues coordinate ATP: K119 and S165. G192 lines the substrate pocket.

It belongs to the Thz kinase family. Requires Mg(2+) as cofactor.

It carries out the reaction 5-(2-hydroxyethyl)-4-methylthiazole + ATP = 4-methyl-5-(2-phosphooxyethyl)-thiazole + ADP + H(+). The protein operates within cofactor biosynthesis; thiamine diphosphate biosynthesis; 4-methyl-5-(2-phosphoethyl)-thiazole from 5-(2-hydroxyethyl)-4-methylthiazole: step 1/1. Catalyzes the phosphorylation of the hydroxyl group of 4-methyl-5-beta-hydroxyethylthiazole (THZ). The polypeptide is Hydroxyethylthiazole kinase (Methanocorpusculum labreanum (strain ATCC 43576 / DSM 4855 / Z)).